A 290-amino-acid polypeptide reads, in one-letter code: UPF0761 membrane protein YihY (290 aa).

The next 6 membrane-spanning stretches (helical) occupy residues 44–64 (LLSL…FPMF), 104–124 (VGAC…DSAL), 140–160 (FAVY…SLAI), 183–203 (IFPL…VPTI), 210–230 (AIVG…GFAL), and 244–264 (VLAV…IVLL).

Belongs to the UPF0761 family.

The protein localises to the cell inner membrane. The polypeptide is UPF0761 membrane protein YihY (Escherichia coli O7:K1 (strain IAI39 / ExPEC)).